Here is a 241-residue protein sequence, read N- to C-terminus: Uridylate kinase (241 aa).

ATP is bound at residue 12–15 (KISG). The tract at residues 20-25 (GEKGTG) is involved in allosteric activation by GTP. A UMP-binding site is contributed by G54. ATP contacts are provided by G55 and R59. UMP-binding positions include D74 and 135–142 (TGNPYFST). The ATP site is built by N163, Y169, and D172.

It belongs to the UMP kinase family. In terms of assembly, homohexamer.

It is found in the cytoplasm. It catalyses the reaction UMP + ATP = UDP + ADP. It participates in pyrimidine metabolism; CTP biosynthesis via de novo pathway; UDP from UMP (UMPK route): step 1/1. With respect to regulation, allosterically activated by GTP. Inhibited by UTP. Catalyzes the reversible phosphorylation of UMP to UDP. The sequence is that of Uridylate kinase from Lactobacillus delbrueckii subsp. bulgaricus (strain ATCC 11842 / DSM 20081 / BCRC 10696 / JCM 1002 / NBRC 13953 / NCIMB 11778 / NCTC 12712 / WDCM 00102 / Lb 14).